Here is a 406-residue protein sequence, read N- to C-terminus: Uronyl 2-sulfotransferase (406 aa).

The Cytoplasmic portion of the chain corresponds to 1 to 49 (MKKKQQHPGGGADPWPHGAPMGGAPPGLGSWKRRVPLLPFLRFSLRDYG). The chain crosses the membrane as a helical; Signal-anchor for type II membrane protein span at residues 50–70 (FCMATLLVFCLGSLLYQLSGG). At 71-406 (PPRFLLDLRQ…EKWLEDIYKR (336 aa)) the chain is on the lumenal side. N-linked (GlcNAc...) asparagine glycans are attached at residues asparagine 84, asparagine 140, and asparagine 155. The active site involves histidine 168. N-linked (GlcNAc...) asparagine glycosylation is found at asparagine 173 and asparagine 319. The span at 387–399 (EPIDDEEQDDEKW) shows a compositional bias: acidic residues. Positions 387-406 (EPIDDEEQDDEKWLEDIYKR) are disordered.

This sequence belongs to the sulfotransferase 3 family. As to expression, widely expressed.

The protein localises to the golgi apparatus membrane. Functionally, sulfotransferase that catalyzes the transfer of sulfate to the position 2 of uronyl residues in glycosaminoglycan chains. Has mainly activity toward iduronyl residues in dermatan sulfate, and weaker activity toward glucuronyl residues of chondroitin sulfate. Has little to no activity toward desulfated N-resulfated heparin or N-sulfoheparosan. The sequence is that of Uronyl 2-sulfotransferase from Homo sapiens (Human).